A 327-amino-acid chain; its full sequence is Cytochrome P450 2C42 (327 aa).

Position 272 (Cys-272) interacts with heme.

It belongs to the cytochrome P450 family. It depends on heme as a cofactor.

The protein localises to the endoplasmic reticulum membrane. Its subcellular location is the microsome membrane. It carries out the reaction an organic molecule + reduced [NADPH--hemoprotein reductase] + O2 = an alcohol + oxidized [NADPH--hemoprotein reductase] + H2O + H(+). In terms of biological role, cytochromes P450 are a group of heme-thiolate monooxygenases. In liver microsomes, this enzyme is involved in an NADPH-dependent electron transport pathway. It oxidizes a variety of structurally unrelated compounds, including steroids, fatty acids, and xenobiotics. This is Cytochrome P450 2C42 (CYP2C42) from Sus scrofa (Pig).